The sequence spans 218 residues: Glutathione S-transferase Mu 6 (218 aa).

One can recognise a GST N-terminal domain in the interval 1–88 (MPVTLGYWDI…YLGRKHNLCG (88 aa)). Glutathione contacts are provided by residues 7–8 (YW), 46–50 (WLNDK), 59–60 (NL), and 72–73 (QS). Residues 90–208 (TEEERIRVDI…KTSRFLPSPV (119 aa)) enclose the GST C-terminal domain. Position 116 (tyrosine 116) interacts with substrate.

Belongs to the GST superfamily. Mu family. Homodimer. Expressed in liver, stomach and small intestine. Not expressed in spleen, kidney, colon, heart, muscle, brain or lung.

It is found in the cytoplasm. It catalyses the reaction RX + glutathione = an S-substituted glutathione + a halide anion + H(+). Its function is as follows. Conjugation of reduced glutathione to a wide number of exogenous and endogenous hydrophobic electrophiles. This chain is Glutathione S-transferase Mu 6 (Gstm6), found in Mus musculus (Mouse).